The following is a 548-amino-acid chain: Chaperonin GroEL 3 (548 aa).

Residues 30 to 33 (TLGP), Lys-51, 87 to 91 (DGTTT), Gly-415, and Asp-496 each bind ATP.

Belongs to the chaperonin (HSP60) family. As to quaternary structure, forms a cylinder of 14 subunits composed of two heptameric rings stacked back-to-back. Interacts with the co-chaperonin GroES.

It localises to the cytoplasm. The enzyme catalyses ATP + H2O + a folded polypeptide = ADP + phosphate + an unfolded polypeptide.. Functionally, together with its co-chaperonin GroES, plays an essential role in assisting protein folding. The GroEL-GroES system forms a nano-cage that allows encapsulation of the non-native substrate proteins and provides a physical environment optimized to promote and accelerate protein folding. The chain is Chaperonin GroEL 3 from Nitrobacter winogradskyi (strain ATCC 25391 / DSM 10237 / CIP 104748 / NCIMB 11846 / Nb-255).